The primary structure comprises 324 residues: Beta-ketoacyl-[acyl-carrier-protein] synthase III (324 aa).

Active-site residues include C112 and H249. Residues 250–254 are ACP-binding; that stretch reads QANRR. Residue N279 is part of the active site.

The protein belongs to the thiolase-like superfamily. FabH family. In terms of assembly, homodimer.

The protein localises to the cytoplasm. The enzyme catalyses malonyl-[ACP] + acetyl-CoA + H(+) = 3-oxobutanoyl-[ACP] + CO2 + CoA. It participates in lipid metabolism; fatty acid biosynthesis. Functionally, catalyzes the condensation reaction of fatty acid synthesis by the addition to an acyl acceptor of two carbons from malonyl-ACP. Catalyzes the first condensation reaction which initiates fatty acid synthesis and may therefore play a role in governing the total rate of fatty acid production. Possesses both acetoacetyl-ACP synthase and acetyl transacylase activities. Its substrate specificity determines the biosynthesis of branched-chain and/or straight-chain of fatty acids. The chain is Beta-ketoacyl-[acyl-carrier-protein] synthase III from Streptococcus equi subsp. zooepidemicus (strain MGCS10565).